A 166-amino-acid polypeptide reads, in one-letter code: Putative pre-16S rRNA nuclease (166 aa).

The protein belongs to the YqgF nuclease family.

It is found in the cytoplasm. Its function is as follows. Could be a nuclease involved in processing of the 5'-end of pre-16S rRNA. The polypeptide is Putative pre-16S rRNA nuclease (Mesorhizobium japonicum (strain LMG 29417 / CECT 9101 / MAFF 303099) (Mesorhizobium loti (strain MAFF 303099))).